We begin with the raw amino-acid sequence, 145 residues long: Small ribosomal subunit protein uS12A (145 aa).

Residue P64 is modified to Hydroxyproline.

The protein belongs to the universal ribosomal protein uS12 family.

The sequence is that of Small ribosomal subunit protein uS12A (RPS23A) from Naumovozyma castellii (Yeast).